Reading from the N-terminus, the 234-residue chain is Large ribosomal subunit protein uL1 (234 aa).

Belongs to the universal ribosomal protein uL1 family. In terms of assembly, part of the 50S ribosomal subunit.

Functionally, binds directly to 23S rRNA. The L1 stalk is quite mobile in the ribosome, and is involved in E site tRNA release. In terms of biological role, protein L1 is also a translational repressor protein, it controls the translation of the L11 operon by binding to its mRNA. The chain is Large ribosomal subunit protein uL1 from Salmonella agona (strain SL483).